The primary structure comprises 613 residues: Glutaminase 1 (613 aa).

Residues 33–315 (GAVADYIPEL…LSSHYDLHML (283 aa)) are glutaminase. Substrate contacts are provided by Ser75, Asn124, Glu168, Asn175, Tyr199, Tyr251, and Val269. In terms of domain architecture, STAS spans 345 to 457 (REILAAHEQE…LDTAIEWAED (113 aa)). 480–595 (LLEGLSADEL…ERIMRNLAQL (116 aa)) provides a ligand contact to a nucleoside 3',5'-cyclic phosphate.

This sequence belongs to the glutaminase family. As to quaternary structure, homotetramer.

It catalyses the reaction L-glutamine + H2O = L-glutamate + NH4(+). This Bradyrhizobium diazoefficiens (strain JCM 10833 / BCRC 13528 / IAM 13628 / NBRC 14792 / USDA 110) protein is Glutaminase 1 (glsA1).